A 758-amino-acid chain; its full sequence is Spastin (758 aa).

The interval 1–103 (MVRTKNQSSS…SPRSGHHHSY (103 aa)) is disordered. The Cytoplasmic portion of the chain corresponds to 1-121 (MVRTKNQSSS…KQNLYVVSFP (121 aa)). Residues 1 to 210 (MVRTKNQSSS…RPIQPLEMAA (210 aa)) are required for localization to punctate cytoplasmic foci. 4 stretches are compositionally biased toward low complexity: residues 8–28 (SSSS…SSGA), 43–58 (RSSS…AGGS), 66–76 (SSNRRSPGSSP), and 85–95 (TDDLTPTTCSP). Positions 122-142 (IIFLFNVLRSLIYQLFCIFRY) form an intramembrane region, helical. The Cytoplasmic segment spans residues 143–758 (LYGASTKVIY…WSQDYGDITI (616 aa)). Composition is skewed to polar residues over residues 169–180 (SKEQQQSLNHPS) and 189–198 (QEQQLSNQPQ). The disordered stretch occupies residues 169 to 202 (SKEQQQSLNHPSELNREGDGQEQQLSNQPQRFRP). Residues 208–758 (MAANRPGGGY…WSQDYGDITI (551 aa)) form a sufficient for interaction with microtubules and microtubule severing region. The MIT domain maps to 233 to 308 (HRRAFEYISK…SMARDRLHFL (76 aa)). The disordered stretch occupies residues 353 to 454 (RVRSSGYGPK…GPSGSGASTP (102 aa)). 2 stretches are compositionally biased toward polar residues: residues 390–406 (NKSQ…TSVG) and 425–454 (QFSS…ASTP). The tract at residues 443–455 (NNGPSGSGASTPV) is required for interaction with microtubules. 523–530 (GPPGNGKT) provides a ligand contact to ATP.

It belongs to the AAA ATPase family. Spastin subfamily. Homohexamer. The homohexamer is stabilized by ATP-binding. The homohexamer may adopt a ring conformation through which microtubules pass prior to being severed. Interacts with microtubules. Interacts with atl; may be involved in microtubule dynamics.

The protein resides in the membrane. It is found in the cytoplasm. The protein localises to the cytoskeleton. It localises to the microtubule organizing center. Its subcellular location is the centrosome. The protein resides in the chromosome. It is found in the lipid droplet. The catalysed reaction is n ATP + n H2O + a microtubule = n ADP + n phosphate + (n+1) alpha/beta tubulin heterodimers.. In terms of biological role, ATP-dependent microtubule severing protein. Stimulates microtubule minus-end depolymerization and poleward microtubule flux in the mitotic spindle. Regulates microtubule stability in the neuromuscular junction synapse. Involved in lipid metabolism by regulating the size and distribution of lipid droplets. Involved in axon regeneration by regulating microtubule severing. The sequence is that of Spastin from Drosophila sechellia (Fruit fly).